The following is a 696-amino-acid chain: MDDDAGDGAASGGTKRKVTAASSSAAAKGKAAGKGKAASKASALATAKESSLLKQKSPAEFFAENKNIAGFDNPGKSLYTTMRELVENALDSAESISELPDIEIIIEEITKSKFNTMIGLVDRQRIDEELYDDFESAKAREKRLAKEARFQETQAKNAALGKKVKEAPAARGKGRGEAAFFRVTCKDNGRGMPHDDIPNMLGRVLSGTKYGLRQTRGKFGLGAKMALIWSKMSTGLPIEIKSSMKGQNFISFCRLDIDIHKNVPHVHLHEKRENKDRWHGAELQVIIEGNWTTHRSKILHYMRQMAVITPYAQFLFRFLSDSPDKNLTIQFARRTDVMPPIPLQTKHHPSAVDLLLIKRLISETTKQNLLQFLQHEFVNISKSHAERLIGEMGPDFSAKTTVKSLTSQQLVRIHQLFRQAKFDDPSGNCLSPAGEYNLRLGIIKELHPDLVATHASSPQVFEGHPFIVEAGISIGGKDVKHGLNIFRYANRIPLLFEQGADVITRTALKRINWSSYKINQQQDKIGVFVSIVSTKIPFKGTGKEYIGDDITEIASAVQSALKQCCLQLKSKIVKKLQARERQDRKRNLNRYIPDVARAIMETLGEIADESPPKRPRYDKEDEELLEKVNSEEVTEMTFRDCLTQHVEQVDYEMALEYAMQSGVSEEPREALYLNSLEGSYKFIDFQSPVFVFRFIP.

Residues 1–36 form a disordered region; sequence MDDDAGDGAASGGTKRKVTAASSSAAAKGKAAGKGK. Residues 20–36 show a composition bias toward low complexity; the sequence is AASSSAAAKGKAAGKGK. Residues asparagine 88, aspartate 187, 208-209, 217-224, and lysine 543 each bind ATP; these read TK and GKFGLGAK.

It belongs to the TOP6B family. In terms of assembly, homodimer. Heterotetramer of two TOP6A and two TOP6B subunits. Interacts with SPO11-2 and TOP6A3. Highly expressed in flowers before pollination. Expressed in roots and shoots.

It localises to the nucleus. It carries out the reaction ATP-dependent breakage, passage and rejoining of double-stranded DNA.. Functionally, component of the DNA topoisomerase VI involved in chromatin organization and progression of endoreduplication cycles. Relaxes both positive and negative superturns and exhibits a strong decatenase activity. The B subunit binds ATP. May be involved in cell proliferation and stress tolerance. The chain is DNA topoisomerase 6 subunit B from Oryza sativa subsp. indica (Rice).